The following is a 59-amino-acid chain: Large ribosomal subunit protein uL30 (59 aa).

This sequence belongs to the universal ribosomal protein uL30 family. As to quaternary structure, part of the 50S ribosomal subunit.

In Streptococcus agalactiae serotype Ia (strain ATCC 27591 / A909 / CDC SS700), this protein is Large ribosomal subunit protein uL30.